Reading from the N-terminus, the 652-residue chain is Phosphomethylpyrimidine synthase (652 aa).

Substrate contacts are provided by residues Asn235, Met264, Tyr293, His329, 349 to 351 (SRG), 390 to 393 (DGMR), and Glu429. His433 is a Zn(2+) binding site. Tyr456 contributes to the substrate binding site. His497 contacts Zn(2+). Cys577, Cys580, and Cys585 together coordinate [4Fe-4S] cluster.

It belongs to the ThiC family. In terms of assembly, homodimer. Requires [4Fe-4S] cluster as cofactor.

It carries out the reaction 5-amino-1-(5-phospho-beta-D-ribosyl)imidazole + S-adenosyl-L-methionine = 4-amino-2-methyl-5-(phosphooxymethyl)pyrimidine + CO + 5'-deoxyadenosine + formate + L-methionine + 3 H(+). Its pathway is cofactor biosynthesis; thiamine diphosphate biosynthesis. Catalyzes the synthesis of the hydroxymethylpyrimidine phosphate (HMP-P) moiety of thiamine from aminoimidazole ribotide (AIR) in a radical S-adenosyl-L-methionine (SAM)-dependent reaction. This is Phosphomethylpyrimidine synthase from Shewanella sediminis (strain HAW-EB3).